A 204-amino-acid chain; its full sequence is Large ribosomal subunit protein uL10 (204 aa).

Residues 170-204 (AADPSVIGGAGEASDQEPKTTETPEASAAQDNTNE) form a disordered region. A compositionally biased stretch (polar residues) spans 192 to 204 (TPEASAAQDNTNE).

Belongs to the universal ribosomal protein uL10 family. As to quaternary structure, part of the ribosomal stalk of the 50S ribosomal subunit. The N-terminus interacts with L11 and the large rRNA to form the base of the stalk. The C-terminus forms an elongated spine to which L12 dimers bind in a sequential fashion forming a multimeric L10(L12)X complex.

Its function is as follows. Forms part of the ribosomal stalk, playing a central role in the interaction of the ribosome with GTP-bound translation factors. The polypeptide is Large ribosomal subunit protein uL10 (Cutibacterium acnes (strain DSM 16379 / KPA171202) (Propionibacterium acnes)).